The following is a 176-amino-acid chain: Inner membrane-spanning protein YciB (176 aa).

5 helical membrane-spanning segments follow: residues 22–42 (IYYA…YTWL), 50–70 (VALI…YYHN), 81–101 (IYSL…KPLI), 121–141 (IAWA…AFWL), and 149–169 (FKVF…GIYI).

This sequence belongs to the YciB family.

Its subcellular location is the cell inner membrane. Functionally, plays a role in cell envelope biogenesis, maintenance of cell envelope integrity and membrane homeostasis. The chain is Inner membrane-spanning protein YciB from Sodalis glossinidius (strain morsitans).